Reading from the N-terminus, the 233-residue chain is MQEFDLTRRCVAEALGTGLLVAAVVGSGIMADALTADDALALVANTIATGAILVVLVTILGPLSGAHFNPAVSLVFALSGRLTRRDCAAYVIAQVAGAIAGTALAHLMFDLPPLDMSMKVRTGPAQWLSEGVAAFGLVATILAGIRFHREAVPWLVGLYITAAYWFTASTSFANPAVALARSFTNTFSGIRPGDLPGFVIAELLGAVCALALMRWLLQPARPIIRQTSPETAP.

The next 2 membrane-spanning stretches (helical) occupy residues 11 to 31 (VAEALGTGLLVAAVVGSGIMA) and 40 to 60 (LALVANTIATGAILVVLVTIL). Residues 69 to 71 (NPA) carry the NPA 1 motif. 3 helical membrane-spanning segments follow: residues 89–109 (AYVIAQVAGAIAGTALAHLMF), 125–145 (AQWLSEGVAAFGLVATILAGI), and 152–172 (VPWLVGLYITAAYWFTASTSF). The NPA 2 signature appears at 174–176 (NPA). A helical transmembrane segment spans residues 193–213 (GDLPGFVIAELLGAVCALALM).

This sequence belongs to the MIP/aquaporin (TC 1.A.8) family. NIP (TC 1.A.8.12) subfamily.

It is found in the cell inner membrane. Involved in resistance to arsenic. Facilitates efflux of arsenite [As(III)]. Arsenate [As(V)] enters the cell through phosphate transport systems and is reduced to arsenite by the arsenate reductase ArsC. Internally generated arsenite flows out of the cell by downhill movement through AqpS. Can also transport the highly toxic methylarsenite [MAs(III)] and the relatively non-toxic methylarsenate [MAs(V)]. May be a component of an methylarsenite resistance pathway in which methylarsenite enters cells via AqpS, is oxidized by ArsH to methylarsenate, which exits the cells via AqpS. This pathway may confer a selective advantage for R.melliloti to grow in the presence of environmental methylarsenicals. The protein is Aquaglyceroporin AqpS of Rhizobium meliloti (strain 1021) (Ensifer meliloti).